Here is a 177-residue protein sequence, read N- to C-terminus: VQ motif-containing protein 11 (177 aa).

Positions 25-34 match the VQ motif; it reads FRNIVQKLTG. A phosphoserine mark is found at Ser43, Ser99, Ser115, Ser142, and Ser145. Basic and acidic residues predominate over residues 115 to 133; that stretch reads SAREEHHAQPDKEEQKAIA. The interval 115–177 is disordered; it reads SAREEHHAQP…RIHEDNHRDS (63 aa). Over residues 148–159 the composition is skewed to low complexity; the sequence is EPAPELLPLFPL. Ser161 carries the post-translational modification Phosphoserine. A compositionally biased stretch (basic and acidic residues) spans 168-177; that stretch reads RIHEDNHRDS.

Phosphorylated on serine residues by MPK6.

It localises to the nucleus. In terms of biological role, may modulate WRKY transcription factor activities. The sequence is that of VQ motif-containing protein 11 from Arabidopsis thaliana (Mouse-ear cress).